The sequence spans 301 residues: Homoserine kinase (301 aa).

ATP is bound at residue 86–96 (PLARGLGSSAT).

The protein belongs to the GHMP kinase family. Homoserine kinase subfamily.

It localises to the cytoplasm. It carries out the reaction L-homoserine + ATP = O-phospho-L-homoserine + ADP + H(+). It functions in the pathway amino-acid biosynthesis; L-threonine biosynthesis; L-threonine from L-aspartate: step 4/5. In terms of biological role, catalyzes the ATP-dependent phosphorylation of L-homoserine to L-homoserine phosphate. In Thermosynechococcus vestitus (strain NIES-2133 / IAM M-273 / BP-1), this protein is Homoserine kinase.